Reading from the N-terminus, the 348-residue chain is Glucose 1-dehydrogenase 2 (348 aa).

Cysteine 39 contacts Zn(2+). Threonine 41 provides a ligand contact to substrate. Positions 64 and 65 each coordinate Zn(2+). Substrate is bound by residues glutamate 110 and glutamate 146. Zn(2+) is bound at residue glutamate 146. Residues 178 to 181 (AGPV), 260 to 262 (LGV), and 289 to 291 (SVN) contribute to the NADP(+) site. Asparagine 291 contributes to the substrate binding site.

This sequence belongs to the zinc-containing alcohol dehydrogenase family. Glucose 1-dehydrogenase subfamily. Zn(2+) serves as cofactor.

It catalyses the reaction D-glucose + NAD(+) = D-glucono-1,5-lactone + NADH + H(+). The enzyme catalyses D-glucose + NADP(+) = D-glucono-1,5-lactone + NADPH + H(+). Catalyzes the NAD(P)(+)-dependent oxidation of D-glucose to D-gluconate via gluconolactone. Can utilize both NAD(+) and NADP(+) as electron acceptor. Is involved in the degradation of glucose through a non-phosphorylative variant of the Entner-Doudoroff pathway. This Vulcanisaeta moutnovskia (strain 768-28) protein is Glucose 1-dehydrogenase 2.